The primary structure comprises 396 residues: Maltose/maltodextrin-binding periplasmic protein (396 aa).

The signal sequence occupies residues 1 to 26; it reads MKIKTGARILALSALTTMMFSASALA.

It belongs to the bacterial solute-binding protein 1 family. In terms of assembly, the complex is composed of two ATP-binding proteins (MalK), two transmembrane proteins (MalG and MalF) and a solute-binding protein (MalE).

It is found in the periplasm. In terms of biological role, part of the ABC transporter complex MalEFGK involved in maltose/maltodextrin import. Binds maltose and higher maltodextrins. This is Maltose/maltodextrin-binding periplasmic protein (malE) from Klebsiella aerogenes (Enterobacter aerogenes).